A 355-amino-acid chain; its full sequence is Uroporphyrinogen decarboxylase (355 aa).

Residues 27 to 31 (RQAGR), D77, Y154, T209, and H327 each bind substrate.

Belongs to the uroporphyrinogen decarboxylase family. As to quaternary structure, homodimer.

The protein localises to the cytoplasm. The enzyme catalyses uroporphyrinogen III + 4 H(+) = coproporphyrinogen III + 4 CO2. Its pathway is porphyrin-containing compound metabolism; protoporphyrin-IX biosynthesis; coproporphyrinogen-III from 5-aminolevulinate: step 4/4. In terms of biological role, catalyzes the decarboxylation of four acetate groups of uroporphyrinogen-III to yield coproporphyrinogen-III. The polypeptide is Uroporphyrinogen decarboxylase (Yersinia pestis bv. Antiqua (strain Antiqua)).